The following is a 417-amino-acid chain: Leucine-rich repeat-containing protein 42 (417 aa).

4 LRR repeats span residues 167–188, 195–215, 227–249, and 252–273; these read CLRSLDLSCCKLGDEHELLEHL, SLTELYLKDNCFSDTGIRKMT, ALKVLDLSSNPGITDRGVLFLFG, and LLQFLDLSDTSIQDRSRTVKKI. The interval 360 to 399 is disordered; the sequence is FFRPEEQKDSDSSKSDKRQRSTKRTGADPGQEDCTIAPAT. Positions 362 to 378 are enriched in basic and acidic residues; the sequence is RPEEQKDSDSSKSDKRQ.

The protein belongs to the LRRC42 family.

This chain is Leucine-rich repeat-containing protein 42 (lrrc42), found in Xenopus tropicalis (Western clawed frog).